We begin with the raw amino-acid sequence, 771 residues long: Transcription factor Sp3 (771 aa).

Disordered stretches follow at residues methionine 1–glutamine 47 and lysine 60–serine 79. Positions alanine 34–glutamine 47 are enriched in low complexity. Lysine 109 participates in a covalent cross-link: Glycyl lysine isopeptide (Lys-Gly) (interchain with G-Cter in SUMO). Transactivation domain (Gln-rich) stretches follow at residues glutamine 129–glutamine 228 and glutamate 341–glutamine 489. Residues isoleucine 451 to glutamine 459 carry the 9aaTAD motif. Positions isoleucine 524–glutamine 610 are repressor domain. Position 541 is an N6-acetyllysine; alternate (lysine 541). A Glycyl lysine isopeptide (Lys-Gly) (interchain with G-Cter in SUMO); alternate cross-link involves residue lysine 541. 3 consecutive C2H2-type zinc fingers follow at residues histidine 611–histidine 635, phenylalanine 641–histidine 665, and phenylalanine 671–histidine 693.

The protein belongs to the Sp1 C2H2-type zinc-finger protein family. As to quaternary structure, interacts with HDAC1 and HDAC2; the interaction deacetylates SP3 and regulates its transcriptional activity. Interacts with v-Jun. Acetylated by histone acetyltransferase p300, deacetylated by HDACs. Acetylation/deacetylation states regulate transcriptional activity. Acetylation appears to activate transcription. Alternate sumoylation and acetylation at Lys-541 also control transcriptional activity. Post-translationally, sumoylation represses transcriptional activity. Lys-541 is the major site. Sumoylation at this site promotes nuclear localization to the nuclear periphery, nuclear dots and PML nuclear bodies. Alternate sumoylation and acetylation at Lys-541 also control transcriptional activity.

It localises to the nucleus. It is found in the PML body. Transcriptional factor that can act as an activator or repressor depending on post-translational modifications. Binds to GT and GC boxes promoter elements. Competes with SP1 for the GC-box promoters. Weak activator of transcription. Required for activation of SPARC transcription. In Gallus gallus (Chicken), this protein is Transcription factor Sp3 (SP3).